The primary structure comprises 253 residues: MKSMIVVACLALACGAHASGWAGPPANIALSQDGRNILDTPEVAQARAAHISALQQASKNNPNPNDDGSYDPRWDNEEYWQQAEGKWNGAPAPAWNAAPAPSWNGAHAAAPSWNAAPAHSWNAAGSAPAPVAETPEVAQARAAHLAALSAAKSAAPAQQQWNAPAHQDWNAPAHQDWNAPAHQDWNAPAHQSWNGAPSWQSGAPAHQPANIRLANDGSGILDTPEVAAARAAHLAAHAQAAHSAPAHAPQQHW.

An N-terminal signal peptide occupies residues 1–18 (MKSMIVVACLALACGAHA). The segment covering 54–66 (LQQASKNNPNPND) has biased composition (polar residues). Residues 54–74 (LQQASKNNPNPNDDGSYDPRW) form a disordered region. 3 repeat units span residues 97-100 (AAPA), 115-118 (AAPA), and 154-157 (AAPA). Over residues 155–167 (APAQQQWNAPAHQ) the composition is skewed to low complexity. Disordered stretches follow at residues 155–178 (APAQ…QDWN) and 187–206 (APAH…APAH). Residues 189–201 (AHQSWNGAPSWQS) show a composition bias toward polar residues.

Its function is as follows. Component of the cuticle of the pupae of silk moth. This is Pupal cuticle protein (PCP) from Bombyx mori (Silk moth).